Here is a 426-residue protein sequence, read N- to C-terminus: MNQLRLEPIKKVSGTINIPGSKSISNRALLLATLASGTTTLTNLLDSDDIRYMLASLKQLGVSYRLSNNNTVCELDGLAGPLNAGEPQTLFLGNAGTAMRPLCAALTLGQGQFTLTGEPRMEERPIGDLVDALRQLGAEVSYLKNEGFPPLNITSTGLNGGNVEIAGDLSSQFLTALLMVAPLAKGDVNIKIKGELVSKPYIDITLALMAQFGVEVQNNDYASFVIKAGQRYVSPGKVLVEGDASSASYFLAAGAIQGGEVKVTGVGKLSIQGDVKFADVLEQMGADIEWGDDYIIARQAKLKAVDLDMNHIPDAAMTIATAALFATGTTRIRNIYNWRIKETDRLAAMATELRKVGAIVDEGHDYISVTPPAKLNTAAIDTYNDHRMAMCFSMMAFADCGITINEPECTSKTFPDYFNQFNALAN.

3-phosphoshikimate contacts are provided by Lys-22, Ser-23, and Arg-27. Residue Lys-22 participates in phosphoenolpyruvate binding. Phosphoenolpyruvate-binding residues include Gly-96 and Arg-124. 7 residues coordinate 3-phosphoshikimate: Ser-170, Ser-171, Gln-172, Ser-198, Asp-314, Asn-337, and Lys-341. Residue Gln-172 participates in phosphoenolpyruvate binding. The active-site Proton acceptor is the Asp-314. Phosphoenolpyruvate-binding residues include Arg-345, Arg-387, and Lys-412.

The protein belongs to the EPSP synthase family. Monomer.

It localises to the cytoplasm. The catalysed reaction is 3-phosphoshikimate + phosphoenolpyruvate = 5-O-(1-carboxyvinyl)-3-phosphoshikimate + phosphate. The protein operates within metabolic intermediate biosynthesis; chorismate biosynthesis; chorismate from D-erythrose 4-phosphate and phosphoenolpyruvate: step 6/7. Catalyzes the transfer of the enolpyruvyl moiety of phosphoenolpyruvate (PEP) to the 5-hydroxyl of shikimate-3-phosphate (S3P) to produce enolpyruvyl shikimate-3-phosphate and inorganic phosphate. The polypeptide is 3-phosphoshikimate 1-carboxyvinyltransferase (Shewanella halifaxensis (strain HAW-EB4)).